Reading from the N-terminus, the 286-residue chain is Tungstate-binding protein TupA (286 aa).

Positions 1–20 (MKRLLSIITAVMMLALALTG) are cleaved as a signal peptide. Cysteine 21 carries the N-palmitoyl cysteine lipid modification. Cysteine 21 carries the S-diacylglycerol cysteine lipid modification.

Monomer. The complex is composed of two ATP-binding proteins (TupC), two transmembrane proteins (TupB) and a solute-binding protein (TupA).

Its subcellular location is the cell membrane. Its function is as follows. Part of an ABC transporter complex involved in tungstate uptake. Specifically binds tungstate. The polypeptide is Tungstate-binding protein TupA (Peptoclostridium acidaminophilum (Eubacterium acidaminophilum)).